A 108-amino-acid polypeptide reads, in one-letter code: UPF0060 membrane protein YnfA (108 aa).

Over 1–5 the chain is Periplasmic; it reads MLKTT. Residues 6–26 form a helical membrane-spanning segment; sequence LLFFVTALCEIIGCFLPWLWI. Over 27-30 the chain is Cytoplasmic; it reads KRGA. The helical transmembrane segment at 31 to 51 threads the bilayer; it reads SVWWLLPAAASLALFVWLLTL. Residues 52–60 are Periplasmic-facing; the sequence is HPAASGRVY. The helical transmembrane segment at 61 to 81 threads the bilayer; that stretch reads AAYGGVYVCTALLWLRVVDGV. The Cytoplasmic portion of the chain corresponds to 82–84; it reads RLT. A helical transmembrane segment spans residues 85 to 105; sequence VYDWSGALIALCGMLIIVVGW. Topologically, residues 106-108 are periplasmic; it reads GRT.

Belongs to the UPF0060 family.

It localises to the cell inner membrane. This is UPF0060 membrane protein YnfA from Salmonella typhi.